Reading from the N-terminus, the 355-residue chain is C-C chemokine receptor type 1 (355 aa).

The Extracellular segment spans residues 1–34 (METPDTTENYDMITEFDYGDATPCHKVNERAILA). Residues 35–60 (QLLPPLYSLVFVIGVVGNLLVVLVLV) form a helical membrane-spanning segment. The Cytoplasmic segment spans residues 61 to 64 (QYKR). The chain crosses the membrane as a helical span at residues 65 to 91 (LKNMTNIYLLNLAISDLLFLFTLPFLI). Residues 92-107 (YYKSTDDWIFGDAMCK) are Extracellular-facing. C106 and C183 are oxidised to a cystine. Residues 108–129 (ILSGFYYTGLYSEIFFIILLTI) form a helical membrane-spanning segment. Topologically, residues 130-146 (DRYLAIVHAVFALRART) are cytoplasmic. The chain crosses the membrane as a helical span at residues 147–171 (VTFGVITSIIIWALAILASSPLMYF). The Extracellular segment spans residues 172-197 (SKTQWNIVRHSCNLHFPYESFQQWKL). The chain crosses the membrane as a helical span at residues 198–223 (FQALKLNLFGLVLPLLVMIVCYTGII). The Cytoplasmic segment spans residues 224 to 239 (KILLRRPNEKKSKAVR). The chain crosses the membrane as a helical span at residues 240–264 (LIFVIMIIFFLFWTPYNLTELISVF). Topologically, residues 265 to 281 (QEFLFTHLCEQNRQLDL) are extracellular. Residues 282–305 (AMEVTEVIANMHCCVNPVIYAFAG) form a helical membrane-spanning segment. The Cytoplasmic segment spans residues 306–355 (ERFRKYLRQLFHRRVAVHLVKWLPFLSGDRLERVSSTSPSTGEHELSAGL).

This sequence belongs to the G-protein coupled receptor 1 family. As to quaternary structure, interacts with CREB3. Interacts with CCL3. Interacts with CCL15. Interacts with CCL23. Interacts with GNAI1. Interacts with PF4/CXCL4.

It is found in the cell membrane. Functionally, chemokine receptor that plays a crucial role in regulating immune cell migration, inflammation, and immune responses. Contributes to the inflammatory response by recruiting immune cells, such as monocytes, macrophages, T-cells, and dendritic cells, to sites of inflammation for the clearance of pathogens and the resolution of tissue damage. When activated by its ligands including CCL3, CCL5-9, CCL13-16 and CCL23, triggers a signaling cascade within immune cells, leading to their migration towards the source of the chemokine. For example, mediates neutrophil migration after activation by CCL3 leading to the sequential release of TNF-alpha and leukotriene B4. Also mediates monocyte migration upon CXCL4 binding. Activation by CCL5 results in neuroinflammation through the ERK1/2 signaling pathway. The sequence is that of C-C chemokine receptor type 1 (CCR1) from Macaca fascicularis (Crab-eating macaque).